The sequence spans 862 residues: MSSSNFNEMNELNMTQTNYGSTKYTAQHHQGVINAIISSLTAPDQPTTVSLQYSNDKNMATEIQAYAKLSGPNWTYYVKDLEVSIGRNTDPLNSALQENSDGVKNSYRVNIDLGPAKVVSRKHAIIKYNMNIGGWELHILGRNGAKVNFQRTHNGPNNPPIRLSSGTLLDIGGTQMMFILPDSDPVVAPICIEHLMPNLINMFGLEGNNNPLLRDIIKQSNYAKQRQLTSNQQIKGFKLYGSGGNAPFGSGANLGPSEQGIFNNNNNSKNKNGYFTSINPNYTASTTTSNTINPQAASPQGPPNTIIAANFVDSYKSSNAYPQALDFTSDLSHDENRNVKPPHSYATMITQAILSSPEGVISLADIYKYISSNYAYYRFAKSGWQNSIRHNLSLNKAFEKVPRRPNEPGKGMKWRISESYQQEFLNKWNTGKVGKIRRGSSVARQLQLHMAKFNSLPMEMDYRLSLNMAQPPKRQLQSHNVLEPSNNNIIEGFVQHVPSKGNLPASQQSQPPVSHQNQSQQPPPQEQRQEIQFTFADTQNRNIALARPIKTPQLQAPNSNANLNQNNMKEYKESLHPPAISISQMNRQSPNNALVSFTNACANSKIINNISDSADKSTNNNGGTKMNLPAISTSSLDENGNLEPTTTTSSGNSNSVPQTGTTTSSLAANSLRLSQPYDTLLRSPTKAFHITAMEAYTPERGSANRARSPLHSNSNNTNNNGANNSNLQTSGMENKQTGLVLDSNVLKSMESNNDNRRLTPSTSKSQNVKSSPGVWNLLQFSSTNNTPAADSGGNKRGFSINPDIKAKENENATSEKDSDSNSNDLETKDINSSPLKNQGGSTANAKELILDTDGAKISIINN.

An FHA domain is found at 83–152; sequence VSIGRNTDPL…NGAKVNFQRT (70 aa). A DNA-binding region (fork-head) is located at residues 339–430; the sequence is VKPPHSYATM…QQEFLNKWNT (92 aa). Disordered regions lie at residues 498 to 528, 611 to 663, 698 to 730, and 750 to 846; these read PSKG…QEQR, SDSA…GTTT, PERG…LQTS, and ESNN…ANAK. Residues 504–520 are compositionally biased toward low complexity; the sequence is PASQQSQPPVSHQNQSQ. Positions 611-644 are enriched in polar residues; sequence SDSADKSTNNNGGTKMNLPAISTSSLDENGNLEP. Residues 645 to 655 are compositionally biased toward low complexity; it reads TTTTSSGNSNS. S708 is subject to Phosphoserine. Positions 712–726 are enriched in low complexity; it reads SNSNNTNNNGANNSN. Polar residues-rich tracts occupy residues 750–770 and 778–788; these read ESNN…NVKS and LQFSSTNNTPA. Residues 804 to 829 are compositionally biased toward basic and acidic residues; it reads IKAKENENATSEKDSDSNSNDLETKD. A compositionally biased stretch (polar residues) spans 830-844; sequence INSSPLKNQGGSTAN. Phosphoserine is present on residues S832 and S833.

Interacts with MCM1. Interacts with NDD1. Interacts with the origin recognition complex (ORC) composed of ORC1 to ORC6.

It localises to the nucleus. The protein localises to the cytoplasm. Its subcellular location is the cytosol. Functionally, transcription factor that regulates the expression of the CLB2 cluster of genes during the G2/M phase of the mitotic cell cycle. The CLB2 cluster of genes includes mitotic regulators such as CLB1, CLB2, CDC5 and CDC20 as well as SWI5 and ACE2, transcription factors required for the subsequent temporal wave of cell cycle regulated gene expression in the M/G1 phase interval. Involved in HMRa silencing. FKH1 and FKH2 associate with the coding regions of active genes and influence, in opposing ways, transcriptional elongation and termination, and coordinate early transcription elongation and pre-mRNA processing. Both FKH1 and FKH2 play a role as regulators of lifespan in collaboration with the anaphase-promoting complex (APC), likely through combined regulation of stress response, genomic stability, and cell cycle regulation. FKH1 and FKH2 function also in controlling yeast cell morphology by preventing preudohyphal growth. Acts as a rate-limiting replication origin activator via its interaction with the origin recognition complex (ORC). The sequence is that of Fork head protein homolog 2 from Saccharomyces cerevisiae (strain ATCC 204508 / S288c) (Baker's yeast).